We begin with the raw amino-acid sequence, 267 residues long: Membrane-spanning 4-domains subfamily A member 10 (267 aa).

Residues methionine 1–glycine 61 are Cytoplasmic-facing. Residues alanine 62 to valine 82 form a helical membrane-spanning segment. Residues lysine 83–lysine 91 are Extracellular-facing. Residues serine 92–methionine 112 form a helical membrane-spanning segment. Over lysine 113 to lysine 121 the chain is Cytoplasmic. Residues methionine 122–isoleucine 142 traverse the membrane as a helical segment. Over serine 143–glutamate 171 the chain is Extracellular. A helical membrane pass occupies residues leucine 172–alanine 192. Residues tryptophan 193–asparagine 267 are Cytoplasmic-facing.

This sequence belongs to the MS4A family.

It is found in the membrane. In terms of biological role, may be involved in signal transduction as a component of a multimeric receptor complex. This is Membrane-spanning 4-domains subfamily A member 10 (MS4A10) from Homo sapiens (Human).